Reading from the N-terminus, the 159-residue chain is Putative ribosomal RNA large subunit methyltransferase H (159 aa).

S-adenosyl-L-methionine-binding positions include L76, G108, and 127–132 (LSAMTF).

It belongs to the RNA methyltransferase RlmH family.

Its subcellular location is the cytoplasm. The catalysed reaction is pseudouridine(1915) in 23S rRNA + S-adenosyl-L-methionine = N(3)-methylpseudouridine(1915) in 23S rRNA + S-adenosyl-L-homocysteine + H(+). In terms of biological role, specifically methylates the pseudouridine at position 1915 (m3Psi1915) in 23S rRNA. This chain is Putative ribosomal RNA large subunit methyltransferase H, found in Methanospirillum hungatei JF-1 (strain ATCC 27890 / DSM 864 / NBRC 100397 / JF-1).